The primary structure comprises 89 residues: Small ribosomal subunit protein uS15 (89 aa).

Belongs to the universal ribosomal protein uS15 family. Part of the 30S ribosomal subunit. Forms a bridge to the 50S subunit in the 70S ribosome, contacting the 23S rRNA.

In terms of biological role, one of the primary rRNA binding proteins, it binds directly to 16S rRNA where it helps nucleate assembly of the platform of the 30S subunit by binding and bridging several RNA helices of the 16S rRNA. Functionally, forms an intersubunit bridge (bridge B4) with the 23S rRNA of the 50S subunit in the ribosome. In Cupriavidus pinatubonensis (strain JMP 134 / LMG 1197) (Cupriavidus necator (strain JMP 134)), this protein is Small ribosomal subunit protein uS15.